The primary structure comprises 1039 residues: Serine/threonine-protein kinase Tao (1039 aa).

A Protein kinase domain is found at 27–280; it reads FEDLREIGHG…SAKLLTHAYV (254 aa). ATP is bound by residues 33-41 and Lys56; that span reads IGHGSFGAV. The Proton acceptor role is filled by Asp150. Disordered regions lie at residues 324-457, 485-508, 629-648, and 677-707; these read SAVG…NSAS, GGGG…LADR, HQQD…KKLH, and WKRE…KQHE. Residues 341–350 show a composition bias toward polar residues; that stretch reads SSKSNSITSE. The segment covering 359 to 376 has biased composition (low complexity); it reads SAASSQSSSSNSIPAAAQ. A compositionally biased stretch (basic residues) spans 377-387; sequence NHHHIAAHHHQ. Composition is skewed to low complexity over residues 388–397 and 413–429; these read QAASAAVAAA and PSGQ…VSRN. Over residues 444 to 454 the composition is skewed to polar residues; sequence HSMNNNVTPTN. Gly residues predominate over residues 485 to 500; that stretch reads GGGGTGTGGSGGGSPA. Coiled coils occupy residues 631–765 and 835–993; these read QDVE…MLLK and KQFR…DNES. A compositionally biased stretch (basic and acidic residues) spans 677–693; that stretch reads WKRELSMDESTPKRQRD.

The protein belongs to the protein kinase superfamily. STE Ser/Thr protein kinase family. STE20 subfamily. In terms of assembly, interacts with Schip1; the interaction enhances Tao kinase activity. Mg(2+) is required as a cofactor. Autophosphorylated. In terms of tissue distribution, in the posterior midgut, expressed in almost all intestinal cell types including intestinal stem cells and enterocytes (at protein level). Maternally expressed, ubiquitously distributed in the egg and early embryo and enriched in the germ plasm at the posterior pole of the early embryo including the pole cells.

It localises to the cytoplasm. The protein resides in the cytoskeleton. Its subcellular location is the spindle. It is found in the membrane. The protein localises to the perikaryon. It localises to the cell cortex. The protein resides in the cell projection. Its subcellular location is the axon. It catalyses the reaction L-seryl-[protein] + ATP = O-phospho-L-seryl-[protein] + ADP + H(+). It carries out the reaction L-threonyl-[protein] + ATP = O-phospho-L-threonyl-[protein] + ADP + H(+). In terms of biological role, serine/threonine-protein kinase which regulates the Hippo/SWH (Sav/Wts/Hpo) signaling pathway, a signaling pathway that plays a pivotal role in organ size control and tumor suppression by restricting proliferation and promoting apoptosis. The core of this pathway is composed of a kinase cascade wherein Hippo (hpo), in complex with its regulatory protein Salvador (sav), phosphorylates and activates Warts (wts) in complex with its regulatory protein Mats, which in turn phosphorylates and inactivates the Yorkie (yki) oncoprotein. In imaginal cells, phosphorylates and activates hpo and leads to repression of yki. In the midgut, negatively regulates the proliferation of intestinal stem cells through the Hippo/SWH pathway. Independent of the hippo/SWH pathway, regulates epithelial morphogenesis in follicle cells by promoting the endocytosis of Fas2 and reducing lateral adhesion between epithelial cells which, in turn, permits shrinking of the lateral membrane and initiates morphogenesis of the squamous epithelium. Required for the development of both the mushroom body and the ellipsoid body in the brain and may act as a negative regulator of the par-1 kinase. Negatively regulates the JNK pathway which increases sensitivity to ethanol exposure. Plays a role in the control of cell shape by negatively regulating the growth of microtubule plus-ends as they contact the actin-rich cell cortex. Required for the induction of apoptosis in pole cells by promoting expression of skl which enhances activity of the apoptosis activator hid. Functionally, induces in vitro expression of large, highly dynamic, microtubule-dependent lamellopodia-like cytoplasmic expansions which constantly probe the environment. Induces in vitro expression of actin-dependent filopodia-like cytoplasmic protrusions which firmly attach to the substrate. Antagonizes the activity of isoform D. The polypeptide is Serine/threonine-protein kinase Tao (Drosophila melanogaster (Fruit fly)).